Reading from the N-terminus, the 390-residue chain is Matrix metalloproteinase-23 (390 aa).

Topologically, residues 1–19 (MGRGARVPSEAPGAGVERR) are cytoplasmic. The propeptide occupies 1-78 (MGRGARVPSE…PGPLAPRRRR (78 aa)). Residues 20 to 40 (WLGAALVALCLLPALVLLARL) traverse the membrane as a helical; Signal-anchor for type II membrane protein segment. Residues 41–390 (GAPAVPAWSA…TYSWRVRVRG (350 aa)) lie on the Lumenal side of the membrane. N-linked (GlcNAc...) asparagine glycosylation is found at N92 and N148. H211 lines the Zn(2+) pocket. The active site involves E212. Positions 215 and 221 each coordinate Zn(2+). N232 carries an N-linked (GlcNAc...) asparagine glycan. The ShKT domain maps to 255–289 (CLDRLFVCASWARRGFCDARRRLMKRLCPSSCDFC). Disulfide bonds link C255/C289, C262/C282, and C271/C286. Residues 295 to 380 (PTVATTPPPP…VVRRQQRVLT (86 aa)) form the Ig-like C2-type domain. N-linked (GlcNAc...) asparagine glycosylation occurs at N316. C321 and C370 are joined by a disulfide.

The protein belongs to the peptidase M10A family. Zn(2+) serves as cofactor. Post-translationally, N-glycosylated. Proteolytic cleavage might yield an active form. As to expression, predominantly expressed in ovary, testis and prostate.

The protein resides in the endoplasmic reticulum membrane. It is found in the membrane. With respect to regulation, inhibited by TIMP2. Functionally, protease. May regulate the surface expression of some potassium channels by retaining them in the endoplasmic reticulum. This is Matrix metalloproteinase-23 (MMP23B) from Homo sapiens (Human).